The sequence spans 177 residues: Large ribosomal subunit protein uL6 (177 aa).

It belongs to the universal ribosomal protein uL6 family. Part of the 50S ribosomal subunit.

This protein binds to the 23S rRNA, and is important in its secondary structure. It is located near the subunit interface in the base of the L7/L12 stalk, and near the tRNA binding site of the peptidyltransferase center. The sequence is that of Large ribosomal subunit protein uL6 from Micrococcus luteus (strain ATCC 4698 / DSM 20030 / JCM 1464 / CCM 169 / CCUG 5858 / IAM 1056 / NBRC 3333 / NCIMB 9278 / NCTC 2665 / VKM Ac-2230) (Micrococcus lysodeikticus).